Here is a 559-residue protein sequence, read N- to C-terminus: Protein NRT1/ PTR FAMILY 2.8 (559 aa).

11 helical membrane passes run 57–77 (GVFL…LTLA), 92–112 (LLLG…TAAL), 132–152 (KWQL…AGGV), 178–198 (FFNW…TGVV), 206–226 (WVIG…TFVI), 321–341 (LKCV…FILT), 374–394 (VSMI…IPIV), 404–424 (LTLK…VAGF), 437–457 (GSFV…LAGL), 481–501 (VAGA…TLLI), and 529–549 (YFFI…LFAS).

The protein belongs to the major facilitator superfamily. Proton-dependent oligopeptide transporter (POT/PTR) (TC 2.A.17) family. In terms of tissue distribution, expressed in flowers.

The protein resides in the membrane. The chain is Protein NRT1/ PTR FAMILY 2.8 (NPF2.8) from Arabidopsis thaliana (Mouse-ear cress).